A 261-amino-acid chain; its full sequence is Transmembrane protein 187 (261 aa).

6 helical membrane passes run 8–28, 43–63, 88–108, 113–133, 140–162, and 190–210; these read AFVH…TGIF, APVA…VNMA, VFAA…WTQW, VLDQ…CLYL, WLFL…HPQG, and SATY…LKLC.

Ubiquitous.

It is found in the membrane. The polypeptide is Transmembrane protein 187 (TMEM187) (Homo sapiens (Human)).